Consider the following 82-residue polypeptide: Small ribosomal subunit protein bS16 (82 aa).

Belongs to the bacterial ribosomal protein bS16 family.

The sequence is that of Small ribosomal subunit protein bS16 from Francisella tularensis subsp. holarctica (strain FTNF002-00 / FTA).